Here is a 292-residue protein sequence, read N- to C-terminus: Ribosomal RNA small subunit methyltransferase H (292 aa).

S-adenosyl-L-methionine is bound by residues 32–34 (GGH), D51, L87, D101, and Q108.

This sequence belongs to the methyltransferase superfamily. RsmH family.

The protein resides in the cytoplasm. It carries out the reaction cytidine(1402) in 16S rRNA + S-adenosyl-L-methionine = N(4)-methylcytidine(1402) in 16S rRNA + S-adenosyl-L-homocysteine + H(+). Its function is as follows. Specifically methylates the N4 position of cytidine in position 1402 (C1402) of 16S rRNA. The sequence is that of Ribosomal RNA small subunit methyltransferase H from Pseudothermotoga lettingae (strain ATCC BAA-301 / DSM 14385 / NBRC 107922 / TMO) (Thermotoga lettingae).